Here is a 193-residue protein sequence, read N- to C-terminus: Auxin-responsive protein IAA23 (193 aa).

Polar residues predominate over residues 1 to 12 (MSTSSGADSSPP). Residues 1–66 (MSTSSGADSS…SPKARAVGWP (66 aa)) are disordered. A compositionally biased stretch (low complexity) spans 21–36 (TALTLALPGSSSSSSS). The short motif at 23–27 (LTLAL) is the EAR-like (transcriptional repression) element. The segment covering 39 to 53 (DPERKRAAHADHADA) has biased composition (basic and acidic residues). In terms of domain architecture, PB1 spans 83-191 (AKLVKVAVDG…EAVNLSPRRS (109 aa)).

The protein belongs to the Aux/IAA family. Homodimers and heterodimers. In terms of tissue distribution, highly expressed in roots. Expressed in seedlings.

It localises to the nucleus. Its function is as follows. Aux/IAA proteins are short-lived transcriptional factors that function as repressors of early auxin response genes at low auxin concentrations. This Oryza sativa subsp. japonica (Rice) protein is Auxin-responsive protein IAA23 (IAA23).